The chain runs to 190 residues: Imidazoleglycerol-phosphate dehydratase (190 aa).

This sequence belongs to the imidazoleglycerol-phosphate dehydratase family.

It localises to the cytoplasm. The enzyme catalyses D-erythro-1-(imidazol-4-yl)glycerol 3-phosphate = 3-(imidazol-4-yl)-2-oxopropyl phosphate + H2O. Its pathway is amino-acid biosynthesis; L-histidine biosynthesis; L-histidine from 5-phospho-alpha-D-ribose 1-diphosphate: step 6/9. This chain is Imidazoleglycerol-phosphate dehydratase, found in Methanococcus vannielii (strain ATCC 35089 / DSM 1224 / JCM 13029 / OCM 148 / SB).